Here is a 140-residue protein sequence, read N- to C-terminus: Histone H2B.1, sperm (140 aa).

Residues 1 to 47 (MPSQRSPTKRSPTKRSPQKGAGKGGKGSKRGGKARRRGGAAVRRRRR) are disordered. 3 short sequence motifs (SPKK motif) span residues 6–9 (SPTK), 11–14 (SPTK), and 16–19 (SPQK). 2 stretches are compositionally biased toward basic residues: residues 7–17 (PTKRSPTKRSP) and 26–47 (KGSK…RRRR). 2 positions are modified to phosphoserine: serine 11 and serine 16. Serine 127 is a glycosylation site (O-linked (GlcNAc) serine). Residue lysine 135 forms a Glycyl lysine isopeptide (Lys-Gly) (interchain with G-Cter in ubiquitin) linkage.

It belongs to the histone H2B family. In terms of assembly, the nucleosome is a histone octamer containing two molecules each of H2A, H2B, H3 and H4 assembled in one H3-H4 heterotetramer and two H2A-H2B heterodimers. The octamer wraps approximately 147 bp of DNA. In terms of processing, monoubiquitination of Lys-135 gives a specific tag for epigenetic transcriptional activation and is also prerequisite for histone H3 'Lys-4' and 'Lys-79' methylation. Post-translationally, phosphorylated on SPKK motifs 2 and 3; which may regulate DNA binding. Dephosphorylated during maturation of spermatids to mature sperm and rephosphorylated at fertilization. GlcNAcylation at Ser-127 promotes monoubiquitination of Lys-135. It fluctuates in response to extracellular glucose, and associates with transcribed genes.

The protein resides in the nucleus. It localises to the chromosome. Functionally, core component of nucleosome. Nucleosomes wrap and compact DNA into chromatin, limiting DNA accessibility to the cellular machineries which require DNA as a template. Histones thereby play a central role in transcription regulation, DNA repair, DNA replication and chromosomal stability. DNA accessibility is regulated via a complex set of post-translational modifications of histones, also called histone code, and nucleosome remodeling. This Strongylocentrotus purpuratus (Purple sea urchin) protein is Histone H2B.1, sperm.